Consider the following 102-residue polypeptide: Cytochrome c3 (102 aa).

Heme c contacts are provided by H26, H29, C34, C37, H38, H39, C50, C55, H56, H73, C81, C84, H85, C95, C98, and H99.

Heme is required as a cofactor.

It is found in the periplasm. Functionally, participates in sulfate respiration coupled with phosphorylation by transferring electrons from the enzyme dehydrogenase to ferredoxin. In Desulfovibrio desulfuricans, this protein is Cytochrome c3.